The chain runs to 320 residues: ATP synthase gamma chain (320 aa).

This sequence belongs to the ATPase gamma chain family. As to quaternary structure, F-type ATPases have 2 components, CF(1) - the catalytic core - and CF(0) - the membrane proton channel. CF(1) has five subunits: alpha(3), beta(3), gamma(1), delta(1), epsilon(1). CF(0) has three main subunits: a, b and c.

It localises to the cell membrane. In terms of biological role, produces ATP from ADP in the presence of a proton gradient across the membrane. The gamma chain is believed to be important in regulating ATPase activity and the flow of protons through the CF(0) complex. This is ATP synthase gamma chain from Lactobacillus helveticus (strain DPC 4571).